The chain runs to 331 residues: Phosphate acyltransferase (331 aa).

The protein belongs to the PlsX family. Homodimer. Probably interacts with PlsY.

The protein localises to the cytoplasm. The enzyme catalyses a fatty acyl-[ACP] + phosphate = an acyl phosphate + holo-[ACP]. The protein operates within lipid metabolism; phospholipid metabolism. Functionally, catalyzes the reversible formation of acyl-phosphate (acyl-PO(4)) from acyl-[acyl-carrier-protein] (acyl-ACP). This enzyme utilizes acyl-ACP as fatty acyl donor, but not acyl-CoA. This is Phosphate acyltransferase from Lactococcus lactis subsp. lactis (strain IL1403) (Streptococcus lactis).